The chain runs to 278 residues: Biotin synthase (278 aa).

The 227-residue stretch at 1–227 (MQIMLCAISN…NAHIMVAGGR (227 aa)) folds into the Radical SAM core domain. The [4Fe-4S] cluster site is built by cysteine 16, cysteine 20, and cysteine 23. [2Fe-2S] cluster contacts are provided by cysteine 60, cysteine 95, and cysteine 153.

The protein belongs to the radical SAM superfamily. Biotin synthase family. In terms of assembly, homodimer. [4Fe-4S] cluster serves as cofactor. The cofactor is [2Fe-2S] cluster.

It carries out the reaction (4R,5S)-dethiobiotin + (sulfur carrier)-SH + 2 reduced [2Fe-2S]-[ferredoxin] + 2 S-adenosyl-L-methionine = (sulfur carrier)-H + biotin + 2 5'-deoxyadenosine + 2 L-methionine + 2 oxidized [2Fe-2S]-[ferredoxin]. It participates in cofactor biosynthesis; biotin biosynthesis; biotin from 7,8-diaminononanoate: step 2/2. Catalyzes the conversion of dethiobiotin (DTB) to biotin by the insertion of a sulfur atom into dethiobiotin via a radical-based mechanism. This chain is Biotin synthase, found in Campylobacter lari (strain RM2100 / D67 / ATCC BAA-1060).